A 277-amino-acid chain; its full sequence is Large ribosomal subunit protein uL2 (277 aa).

2 disordered regions span residues 1–55 (MGIR…RHQG) and 217–277 (KRPS…KKKR). Positions 37–55 (LHSKGGRNGHGRITARHQG) are enriched in basic residues.

This sequence belongs to the universal ribosomal protein uL2 family. In terms of assembly, part of the 50S ribosomal subunit. Forms a bridge to the 30S subunit in the 70S ribosome.

Its function is as follows. One of the primary rRNA binding proteins. Required for association of the 30S and 50S subunits to form the 70S ribosome, for tRNA binding and peptide bond formation. It has been suggested to have peptidyltransferase activity; this is somewhat controversial. Makes several contacts with the 16S rRNA in the 70S ribosome. The polypeptide is Large ribosomal subunit protein uL2 (Thermobifida fusca (strain YX)).